Reading from the N-terminus, the 378-residue chain is Ribosomal RNA large subunit methyltransferase G (378 aa).

The protein belongs to the methyltransferase superfamily. RlmG family.

Its subcellular location is the cytoplasm. The catalysed reaction is guanosine(1835) in 23S rRNA + S-adenosyl-L-methionine = N(2)-methylguanosine(1835) in 23S rRNA + S-adenosyl-L-homocysteine + H(+). Its function is as follows. Specifically methylates the guanine in position 1835 (m2G1835) of 23S rRNA. The chain is Ribosomal RNA large subunit methyltransferase G from Salmonella newport (strain SL254).